A 622-amino-acid polypeptide reads, in one-letter code: FERM domain-containing protein 6 (622 aa).

In terms of domain architecture, FERM spans 16-328 (RSVCIFLPND…NSHRLYMNLQ (313 aa)). Residues 364–445 (KRSRASGSSA…SGVESGGKDR (82 aa)) form a disordered region. Low complexity-rich tracts occupy residues 384 to 395 (HSTASHSSSHTS) and 425 to 438 (SSMT…TSGV). Serine 522 is modified (phosphoserine). A Phosphothreonine modification is found at threonine 523. A phosphoserine mark is found at serine 525, serine 542, and serine 544.

It is found in the cytoplasm. The protein resides in the cell membrane. The protein is FERM domain-containing protein 6 (FRMD6) of Homo sapiens (Human).